The chain runs to 130 residues: Large ribosomal subunit protein bL12 (130 aa).

Belongs to the bacterial ribosomal protein bL12 family. Homodimer. Part of the ribosomal stalk of the 50S ribosomal subunit. Forms a multimeric L10(L12)X complex, where L10 forms an elongated spine to which 2 to 4 L12 dimers bind in a sequential fashion. Binds GTP-bound translation factors.

Functionally, forms part of the ribosomal stalk which helps the ribosome interact with GTP-bound translation factors. Is thus essential for accurate translation. In Herpetosiphon aurantiacus (strain ATCC 23779 / DSM 785 / 114-95), this protein is Large ribosomal subunit protein bL12.